The sequence spans 482 residues: Methylenetetrahydrofolate--tRNA-(uracil-5-)-methyltransferase TrmFO (482 aa).

Gly11–Gly16 serves as a coordination point for FAD.

It belongs to the MnmG family. TrmFO subfamily. FAD is required as a cofactor.

It is found in the cytoplasm. The enzyme catalyses uridine(54) in tRNA + (6R)-5,10-methylene-5,6,7,8-tetrahydrofolate + NADH + H(+) = 5-methyluridine(54) in tRNA + (6S)-5,6,7,8-tetrahydrofolate + NAD(+). It carries out the reaction uridine(54) in tRNA + (6R)-5,10-methylene-5,6,7,8-tetrahydrofolate + NADPH + H(+) = 5-methyluridine(54) in tRNA + (6S)-5,6,7,8-tetrahydrofolate + NADP(+). Its function is as follows. Catalyzes the folate-dependent formation of 5-methyl-uridine at position 54 (M-5-U54) in all tRNAs. This chain is Methylenetetrahydrofolate--tRNA-(uracil-5-)-methyltransferase TrmFO, found in Nitratidesulfovibrio vulgaris (strain DP4) (Desulfovibrio vulgaris).